Consider the following 425-residue polypeptide: tRNA(Ile)-lysidine synthase (425 aa).

Residue 27–32 (SGGLDS) coordinates ATP.

Belongs to the tRNA(Ile)-lysidine synthase family.

The protein resides in the cytoplasm. It carries out the reaction cytidine(34) in tRNA(Ile2) + L-lysine + ATP = lysidine(34) in tRNA(Ile2) + AMP + diphosphate + H(+). Its function is as follows. Ligates lysine onto the cytidine present at position 34 of the AUA codon-specific tRNA(Ile) that contains the anticodon CAU, in an ATP-dependent manner. Cytidine is converted to lysidine, thus changing the amino acid specificity of the tRNA from methionine to isoleucine. The chain is tRNA(Ile)-lysidine synthase from Streptococcus pneumoniae (strain P1031).